Reading from the N-terminus, the 397-residue chain is 3-ketoacyl-CoA thiolase, mitochondrial (397 aa).

Residues 1–16 (MALLRGVFIVAAKRTP) constitute a mitochondrion; not cleaved transit peptide. Lys-25 is modified (N6-acetyllysine; alternate). Lys-25 carries the post-translational modification N6-succinyllysine; alternate. Catalysis depends on Cys-92, which acts as the Acyl-thioester intermediate. Residue Thr-119 is modified to Phosphothreonine. The residue at position 121 (Ser-121) is a Phosphoserine. Tyr-127 is modified (phosphotyrosine). Thr-136 is subject to Phosphothreonine. Position 137 is an N6-acetyllysine; alternate (Lys-137). N6-succinyllysine; alternate is present on Lys-137. Ser-140 bears the Phosphoserine mark. 4 positions are modified to N6-acetyllysine; alternate: Lys-143, Lys-171, Lys-191, and Lys-209. An N6-succinyllysine; alternate mark is found at Lys-143, Lys-171, Lys-191, and Lys-209. N6-succinyllysine occurs at positions 212 and 214. Residues Arg-224 and Thr-227 each contribute to the CoA site. Lys-234 carries the post-translational modification N6-acetyllysine; alternate. Lys-234 carries the N6-succinyllysine; alternate modification. The residue at position 240 (Lys-240) is an N6-succinyllysine. Lys-241 is modified (N6-acetyllysine). Ser-251 contributes to the CoA binding site. 2 positions are modified to N6-acetyllysine: Lys-269 and Lys-270. Residue Lys-305 is modified to N6-acetyllysine; alternate. At Lys-305 the chain carries N6-succinyllysine; alternate. Ser-310 is modified (phosphoserine). At Lys-312 the chain carries N6-acetyllysine; alternate. Residue Lys-312 is modified to N6-succinyllysine; alternate. Ser-333 is modified (phosphoserine). 2 positions are modified to N6-acetyllysine: Lys-340 and Lys-375. The active-site Proton donor/acceptor is Cys-382.

This sequence belongs to the thiolase-like superfamily. Thiolase family. In terms of assembly, homotetramer. Interacts with BNIP3.

The protein resides in the mitochondrion. The enzyme catalyses an acyl-CoA + acetyl-CoA = a 3-oxoacyl-CoA + CoA. It catalyses the reaction 2 acetyl-CoA = acetoacetyl-CoA + CoA. The catalysed reaction is acetyl-CoA + H2O = acetate + CoA + H(+). It carries out the reaction propanoyl-CoA + H2O = propanoate + CoA + H(+). The enzyme catalyses butanoyl-CoA + H2O = butanoate + CoA + H(+). It catalyses the reaction hexanoyl-CoA + H2O = hexanoate + CoA + H(+). The catalysed reaction is octanoyl-CoA + H2O = octanoate + CoA + H(+). It carries out the reaction decanoyl-CoA + H2O = decanoate + CoA + H(+). The enzyme catalyses dodecanoyl-CoA + H2O = dodecanoate + CoA + H(+). It catalyses the reaction tetradecanoyl-CoA + H2O = tetradecanoate + CoA + H(+). The catalysed reaction is hexadecanoyl-CoA + H2O = hexadecanoate + CoA + H(+). Its pathway is lipid metabolism; fatty acid beta-oxidation. In terms of biological role, in the production of energy from fats, this is one of the enzymes that catalyzes the last step of the mitochondrial beta-oxidation pathway, an aerobic process breaking down fatty acids into acetyl-CoA. Using free coenzyme A/CoA, catalyzes the thiolytic cleavage of medium- to long-chain unbranched 3-oxoacyl-CoAs into acetyl-CoA and a fatty acyl-CoA shortened by two carbon atoms. Also catalyzes the condensation of two acetyl-CoA molecules into acetoacetyl-CoA and could be involved in the production of ketone bodies. Also displays hydrolase activity on various fatty acyl-CoAs. Thereby, could be responsible for the production of acetate in a side reaction to beta-oxidation. Abolishes BNIP3-mediated apoptosis and mitochondrial damage. The polypeptide is 3-ketoacyl-CoA thiolase, mitochondrial (ACAA2) (Bos taurus (Bovine)).